Reading from the N-terminus, the 164-residue chain is Decoration protein (164 aa).

Positions 1 to 72 are binding to the capsid hexamer; sequence MIDYSGLRTI…AIPPAPPAPP (72 aa). An Ig-like domain is found at 71 to 164; that stretch reads PPLTLSKDLT…VTVNPTVPGG (94 aa).

As to quaternary structure, interacts with the major capsid protein; each hexon binds a single copy of the decoration protein.

Its subcellular location is the virion. In terms of biological role, decoration protein that binds asymmetrically to the center of each capsid protein hexamer after capsid expansion. Stabilizes the capsid and protects from DNA release. This is Decoration protein from Escherichia phage T5 (Enterobacteria phage T5).